The primary structure comprises 247 residues: Triosephosphate isomerase (247 aa).

8–10 (NWK) is a substrate binding site. H95 (electrophile) is an active-site residue. The active-site Proton acceptor is E162. The substrate site is built by G168 and S207.

Belongs to the triosephosphate isomerase family. In terms of assembly, homodimer.

The protein resides in the cytoplasm. The enzyme catalyses D-glyceraldehyde 3-phosphate = dihydroxyacetone phosphate. It participates in carbohydrate biosynthesis; gluconeogenesis. It functions in the pathway carbohydrate degradation; glycolysis; D-glyceraldehyde 3-phosphate from glycerone phosphate: step 1/1. Involved in the gluconeogenesis. Catalyzes stereospecifically the conversion of dihydroxyacetone phosphate (DHAP) to D-glyceraldehyde-3-phosphate (G3P). This chain is Triosephosphate isomerase, found in Gluconacetobacter diazotrophicus (strain ATCC 49037 / DSM 5601 / CCUG 37298 / CIP 103539 / LMG 7603 / PAl5).